The following is a 348-amino-acid chain: MSLMVVSMACVGFFLLQGAWPHEGVHRKPSLLAHPGRLVKSEETVILQCWSDVRFEHFLLHREGKFKDTLHLIGEHHDGVSKANFSIGPMMQDLAGTYRCYGSVTHSPYQLSAPSDPLDIVITGLYEKPSLSAQPGPTVLAGESVTLSCSSRSSYDMYHLSREGEAHECRFSAGPKVNGTFQADFPLGPATHGGTYRCFGSFRDSPYEWSNSSDPLLVSVIGNPSNSWPSPTEPSSKTGNPRHLHILIGTSVVIILFILLFFLLHRWCSNKKNAAVMDQESAGNRTANSEDSDEQDPQEVTYTQLNHCVFTQRKITRPSQRPKTPPTDIIVYAELPNAESRSKVVSCP.

The first 21 residues, 1 to 21 (MSLMVVSMACVGFFLLQGAWP), serve as a signal peptide directing secretion. Residues 22–245 (HEGVHRKPSL…SKTGNPRHLH (224 aa)) are Extracellular-facing. Ig-like C2-type domains follow at residues 42–107 (EETV…VTHS) and 142–205 (GESV…FRDS). 2 cysteine pairs are disulfide-bonded: Cys-49–Cys-100 and Cys-149–Cys-198. N-linked (GlcNAc...) asparagine glycosylation is found at Asn-84, Asn-178, and Asn-211. A helical membrane pass occupies residues 246–264 (ILIGTSVVIILFILLFFLL). At 265 to 348 (HRWCSNKKNA…ESRSKVVSCP (84 aa)) the chain is on the cytoplasmic side.

This sequence belongs to the immunoglobulin superfamily.

The protein localises to the cell membrane. Functionally, receptor on natural killer (NK) cells for HLA-Cw1, 3, 7, and 8 allotypes. Inhibits the activity of NK cells thus preventing cell lysis. This Homo sapiens (Human) protein is Killer cell immunoglobulin-like receptor 2DL2.